The sequence spans 318 residues: DNA-directed RNA polymerase subunit alpha 2 (318 aa).

Positions Met-1–Glu-227 are alpha N-terminal domain (alpha-NTD). The segment at Ile-242 to Leu-318 is alpha C-terminal domain (alpha-CTD).

The protein belongs to the RNA polymerase alpha chain family. In terms of assembly, homodimer. The RNAP catalytic core consists of 2 alpha, 1 beta, 1 beta' and 1 omega subunit. When a sigma factor is associated with the core the holoenzyme is formed, which can initiate transcription.

It catalyses the reaction RNA(n) + a ribonucleoside 5'-triphosphate = RNA(n+1) + diphosphate. In terms of biological role, DNA-dependent RNA polymerase catalyzes the transcription of DNA into RNA using the four ribonucleoside triphosphates as substrates. The chain is DNA-directed RNA polymerase subunit alpha 2 from Francisella tularensis subsp. tularensis (strain FSC 198).